The sequence spans 481 residues: Glutamate--cysteine ligase (481 aa).

It belongs to the glutamate--cysteine ligase type 1 family. Type 1 subfamily.

It carries out the reaction L-cysteine + L-glutamate + ATP = gamma-L-glutamyl-L-cysteine + ADP + phosphate + H(+). Its pathway is sulfur metabolism; glutathione biosynthesis; glutathione from L-cysteine and L-glutamate: step 1/2. The polypeptide is Glutamate--cysteine ligase (Clostridium acetobutylicum (strain ATCC 824 / DSM 792 / JCM 1419 / IAM 19013 / LMG 5710 / NBRC 13948 / NRRL B-527 / VKM B-1787 / 2291 / W)).